The primary structure comprises 744 residues: Probable methylmalonyl-CoA mutase, mitochondrial (744 aa).

Residues 605-737 form the B12-binding domain; sequence QPRIMVAKMG…EKLEANLPEA (133 aa). H618 serves as a coordination point for adenosylcob(III)alamin.

Belongs to the methylmalonyl-CoA mutase family. Homodimer. The cofactor is adenosylcob(III)alamin.

The protein resides in the mitochondrion matrix. It carries out the reaction (R)-methylmalonyl-CoA = succinyl-CoA. Involved, in man, in the degradation of several amino acids, odd-chain fatty acids and cholesterol via propionyl-CoA to the tricarboxylic acid cycle. MCM has different functions in other species. The polypeptide is Probable methylmalonyl-CoA mutase, mitochondrial (mmcm-1) (Caenorhabditis elegans).